The following is a 113-amino-acid chain: Regulator of rDNA transcription protein 7 (113 aa).

2 helical membrane-spanning segments follow: residues 13–35 and 70–92; these read FLPI…LFYN and FLLG…LLFL.

Its subcellular location is the membrane. Its function is as follows. Identified in a screen for mutants with decreased levels of rDNA transcription. This is Regulator of rDNA transcription protein 7 (RRT7) from Saccharomyces cerevisiae (strain ATCC 204508 / S288c) (Baker's yeast).